Here is a 90-residue protein sequence, read N- to C-terminus: uncharacterized protein (90 aa).

The first 21 residues, 1–21 (MFKFSIPLLLFIFLFFSCINS), serve as a signal peptide directing secretion. The tract at residues 56 to 90 (SNEKLPERILSGSSGSCSSCSISSSNGSSSRSSKQ) is disordered. Low complexity predominate over residues 66-90 (SGSSGSCSSCSISSSNGSSSRSSKQ). A glycan (N-linked (GlcNAc...) asparagine) is linked at Asn-81.

This is an uncharacterized protein from Dictyostelium discoideum (Social amoeba).